The sequence spans 196 residues: uncharacterized protein (196 aa).

The tract at residues 1 to 21 (MQPEVEPLISPNLGAPGSHRE) is disordered.

This is an uncharacterized protein from Mus musculus (Mouse).